Here is a 309-residue protein sequence, read N- to C-terminus: tRNA pseudouridine synthase B (309 aa).

Asp-39 functions as the Nucleophile in the catalytic mechanism. In terms of domain architecture, PUA spans 229 to 306 (LPRVVVHQES…ERVLTLRKVF (78 aa)).

It belongs to the pseudouridine synthase TruB family. Type 1 subfamily.

It carries out the reaction uridine(55) in tRNA = pseudouridine(55) in tRNA. Responsible for synthesis of pseudouridine from uracil-55 in the psi GC loop of transfer RNAs. The chain is tRNA pseudouridine synthase B from Thermotoga petrophila (strain ATCC BAA-488 / DSM 13995 / JCM 10881 / RKU-1).